Here is a 641-residue protein sequence, read N- to C-terminus: 1-deoxy-D-xylulose-5-phosphate synthase (641 aa).

Thiamine diphosphate-binding positions include histidine 71 and 112 to 114; that span reads SHA. Aspartate 144 contributes to the Mg(2+) binding site. Thiamine diphosphate is bound by residues 145–146, asparagine 173, tyrosine 284, and glutamate 365; that span reads GA. Residue asparagine 173 participates in Mg(2+) binding.

The protein belongs to the transketolase family. DXPS subfamily. Homodimer. It depends on Mg(2+) as a cofactor. Requires thiamine diphosphate as cofactor.

The enzyme catalyses D-glyceraldehyde 3-phosphate + pyruvate + H(+) = 1-deoxy-D-xylulose 5-phosphate + CO2. It functions in the pathway metabolic intermediate biosynthesis; 1-deoxy-D-xylulose 5-phosphate biosynthesis; 1-deoxy-D-xylulose 5-phosphate from D-glyceraldehyde 3-phosphate and pyruvate: step 1/1. Catalyzes the acyloin condensation reaction between C atoms 2 and 3 of pyruvate and glyceraldehyde 3-phosphate to yield 1-deoxy-D-xylulose-5-phosphate (DXP). This chain is 1-deoxy-D-xylulose-5-phosphate synthase, found in Mycobacterium avium (strain 104).